Here is a 298-residue protein sequence, read N- to C-terminus: Foldase protein PrsA 1 (298 aa).

Residues 1 to 23 (MNKTWKKAATVLAFAGIALSATA) form the signal peptide. The N-palmitoyl cysteine moiety is linked to residue Cys24. Residue Cys24 is the site of S-diacylglycerol cysteine attachment. In terms of domain architecture, PpiC spans 141–234 (QPEVTVQHIL…YGYHVIKMIK (94 aa)).

The protein belongs to the PrsA family.

The protein resides in the cell membrane. It carries out the reaction [protein]-peptidylproline (omega=180) = [protein]-peptidylproline (omega=0). Plays a major role in protein secretion by helping the post-translocational extracellular folding of several secreted proteins. The sequence is that of Foldase protein PrsA 1 (prsA1) from Lactobacillus johnsonii (strain CNCM I-12250 / La1 / NCC 533).